A 296-amino-acid chain; its full sequence is Phosphoribosylaminoimidazole-succinocarboxamide synthase (296 aa).

It belongs to the SAICAR synthetase family.

The enzyme catalyses 5-amino-1-(5-phospho-D-ribosyl)imidazole-4-carboxylate + L-aspartate + ATP = (2S)-2-[5-amino-1-(5-phospho-beta-D-ribosyl)imidazole-4-carboxamido]succinate + ADP + phosphate + 2 H(+). The protein operates within purine metabolism; IMP biosynthesis via de novo pathway; 5-amino-1-(5-phospho-D-ribosyl)imidazole-4-carboxamide from 5-amino-1-(5-phospho-D-ribosyl)imidazole-4-carboxylate: step 1/2. In Geotalea uraniireducens (strain Rf4) (Geobacter uraniireducens), this protein is Phosphoribosylaminoimidazole-succinocarboxamide synthase.